Here is a 1381-residue protein sequence, read N- to C-terminus: Non-structural polyprotein 1AB (1381 aa).

Positions 121 to 160 (VLVQEHKKLDSDLKESRRELSQLKLEHSLLRHDYERLVRE) form a coiled coil. Helical transmembrane passes span 169 to 189 (FKFSAVIFYAFFLGFLLMSAV), 249 to 269 (LALGYFPYFANWHMAAFLVGT), 279 to 299 (LYMLVTLVLATLSRFQLVALA), 324 to 344 (AFAILASVLISVLLLILCLAM), and 365 to 385 (FSHLVSFLHAPGWFTIIAILI). Active-site charge relay system; for serine protease activity residues include His-477, Asp-506, and Ser-569. Tyr-694 is modified (O-(5'-phospho-RNA)-tyrosine). Residues 703 to 732 (TRDQLREMAEAAREADDDFDDYEEEKNEVD) adopt a coiled-coil conformation. Residues 856–879 (MQRKKQKPKKREEGPERGPINPDE) are disordered. The RdRp catalytic domain maps to 1122 to 1254 (SVFIEFDWTR…TFDHVPPDYV (133 aa)).

The protein belongs to the astroviridae polyprotein 1AB family. Monomer. Post-translationally, cleaved by the viral and host proteases. The protease is probably autocatalytically cleaved.

The protein localises to the host membrane. It carries out the reaction RNA(n) + a ribonucleoside 5'-triphosphate = RNA(n+1) + diphosphate. Its function is as follows. Responsible for the cleavage of the polyprotein into functional products. In terms of biological role, protein covalently attached to the 5' extremity of the genomic and subgenomic RNAs. It may serve as a primer for the replicase. The sequence is that of Non-structural polyprotein 1AB (ORF1) from Neovison vison (American mink).